We begin with the raw amino-acid sequence, 1940 residues long: Myosin-3 (1940 aa).

The Myosin N-terminal SH3-like domain maps to 33-82 (DAKTYCFVVDSKEEYAKGKIKSSQDGKVTVETEDNRTLVVKPEDVYAMNP). The Myosin motor domain occupies 86 to 779 (DKIEDMAMLT…LLGTLEEMRD (694 aa)). K130 is modified (N6,N6,N6-trimethyllysine). 179-186 (GESGAGKT) provides a ligand contact to ATP. Actin-binding regions lie at residues 656–678 (LNKLMSNLRTTHPHFVRCIIPNE) and 758–772 (KFGHTKVFFKAGLLG). Positions 782 to 811 (LAKLITRTQAVCRGFLMRVEFQKMMQRRES) constitute an IQ domain. A coiled-coil region spans residues 840–1933 (LLKSAETEKE…KTRDFTSSRM (1094 aa)). The tract at residues 1260 to 1289 (ARGKNEETQRSLSELTTQKSRLQTEAGELS) is disordered. Residues 1269–1282 (RSLSELTTQKSRLQ) are compositionally biased toward polar residues.

This sequence belongs to the TRAFAC class myosin-kinesin ATPase superfamily. Myosin family. As to quaternary structure, muscle myosin is a hexameric protein that consists of 2 heavy chain subunits (MHC), 2 alkali light chain subunits (MLC) and 2 regulatory light chain subunits (MLC-2).

It localises to the cytoplasm. It is found in the myofibril. Functionally, muscle contraction. The sequence is that of Myosin-3 (Myh3) from Rattus norvegicus (Rat).